The sequence spans 200 residues: Large ribosomal subunit protein bL25 (200 aa).

It belongs to the bacterial ribosomal protein bL25 family. CTC subfamily. As to quaternary structure, part of the 50S ribosomal subunit; part of the 5S rRNA/L5/L18/L25 subcomplex. Contacts the 5S rRNA. Binds to the 5S rRNA independently of L5 and L18.

This is one of the proteins that binds to the 5S RNA in the ribosome where it forms part of the central protuberance. The protein is Large ribosomal subunit protein bL25 of Pseudomonas fluorescens (strain Pf0-1).